Reading from the N-terminus, the 89-residue chain is Extender of the chronological lifespan protein ecl3 (89 aa).

It belongs to the ecl1 family.

It localises to the nucleus. In terms of biological role, involved in chronological cell aging. The sequence is that of Extender of the chronological lifespan protein ecl3 (ecl3) from Schizosaccharomyces pombe (strain 972 / ATCC 24843) (Fission yeast).